The chain runs to 492 residues: N-succinylglutamate 5-semialdehyde dehydrogenase (492 aa).

225-230 provides a ligand contact to NAD(+); it reads GSSNTG. Active-site residues include Glu248 and Cys282.

This sequence belongs to the aldehyde dehydrogenase family. AstD subfamily.

It carries out the reaction N-succinyl-L-glutamate 5-semialdehyde + NAD(+) + H2O = N-succinyl-L-glutamate + NADH + 2 H(+). The protein operates within amino-acid degradation; L-arginine degradation via AST pathway; L-glutamate and succinate from L-arginine: step 4/5. Its function is as follows. Catalyzes the NAD-dependent reduction of succinylglutamate semialdehyde into succinylglutamate. In Colwellia psychrerythraea (strain 34H / ATCC BAA-681) (Vibrio psychroerythus), this protein is N-succinylglutamate 5-semialdehyde dehydrogenase.